We begin with the raw amino-acid sequence, 145 residues long: Large ribosomal subunit protein uL15 (145 aa).

Residues 1-52 (MFNLLKPKGASKRRKIVGRGPGSGLGKTSGRGQKGQKARNTSPRLGFEGGQT) are disordered. Residues 19 to 33 (RGPGSGLGKTSGRGQ) are compositionally biased toward gly residues.

This sequence belongs to the universal ribosomal protein uL15 family. In terms of assembly, part of the 50S ribosomal subunit.

In terms of biological role, binds to the 23S rRNA. In Borreliella burgdorferi (strain ATCC 35210 / DSM 4680 / CIP 102532 / B31) (Borrelia burgdorferi), this protein is Large ribosomal subunit protein uL15.